The following is a 355-amino-acid chain: Uroporphyrinogen decarboxylase (355 aa).

Residues 38-42 (RQAGR), Asp-87, Tyr-162, Ser-217, and His-331 contribute to the substrate site.

This sequence belongs to the uroporphyrinogen decarboxylase family. Homodimer.

It localises to the cytoplasm. The enzyme catalyses uroporphyrinogen III + 4 H(+) = coproporphyrinogen III + 4 CO2. Its pathway is porphyrin-containing compound metabolism; protoporphyrin-IX biosynthesis; coproporphyrinogen-III from 5-aminolevulinate: step 4/4. Functionally, catalyzes the decarboxylation of four acetate groups of uroporphyrinogen-III to yield coproporphyrinogen-III. In Streptomyces coelicolor (strain ATCC BAA-471 / A3(2) / M145), this protein is Uroporphyrinogen decarboxylase.